The following is a 505-amino-acid chain: Maturase K (505 aa).

The protein belongs to the intron maturase 2 family. MatK subfamily.

It is found in the plastid. The protein localises to the chloroplast. Its function is as follows. Usually encoded in the trnK tRNA gene intron. Probably assists in splicing its own and other chloroplast group II introns. This chain is Maturase K, found in Morus alba (White mulberry).